The chain runs to 300 residues: MVSALSCTHERRCYAIRTHLLQNYAGMGLSHYSGSSFVAAQHTGWYLRQAARIARAAEVFELQEDGTVLAEHILQPDSGVWTLYPQAQHKVEPLDDDFAVQLEFHCEKADYFHKKHGMTTTHSAIREAVQTVAPCKTLDLGCGQGHNALFLSLAGYDVRAVDHSPAAVASVLDMAAREQLPLRADAYDINAAALNEDYDFIFATVVFIFLQAGRVPEIIADMQAHTRPGGYNLIVSAMDTADYPCHMPFSFTFKEDELRQYYADWELLKYEEAVGLMHATDAQGRPIQLKFVTMLAKKPG.

A helical transmembrane segment spans residues 200-221 (FIFATVVFIFLQAGRVPEIIAD).

The protein resides in the cell membrane. In terms of biological role, induces agglutination of neuraminidase-treated erythrocytes. This Eikenella corrodens protein is Hemagglutinin 1 (hag1).